A 218-amino-acid chain; its full sequence is Cytidylate kinase (218 aa).

11 to 19 is a binding site for ATP; sequence GPSGVGKST.

Belongs to the cytidylate kinase family. Type 1 subfamily.

The protein resides in the cytoplasm. The catalysed reaction is CMP + ATP = CDP + ADP. The enzyme catalyses dCMP + ATP = dCDP + ADP. This chain is Cytidylate kinase, found in Mycoplasmopsis synoviae (strain 53) (Mycoplasma synoviae).